A 792-amino-acid polypeptide reads, in one-letter code: MQFSEHWLRSLVNPPLDSESLGHLLTMAGLEVEEAVPAAAAFSGVVVGRIIEAEKHPNADKLKLCKVDVGQDELLQIVCGAPNAAAGLRVPCAMVGAKLPGFDIKAAKLRGVESFGMLCSARELGLSDDHGGLLELPDNAPIGQDIRNFLALDDTLFTIKLTPNRSDCLSLAGVAREVAALTGQPFALPQIEAVVPAIDDRRPVVLDAPDGCPRYCSRIVRGVDAKAPTPDWMKQRLQRSGVRSISALVDVTNYVMLELGQPLHAFDNAKLVGAIHVRYPHAGEKVLLLNEQTVVPAADTLLIADEARALALAGIMGGEDSGITLDTVDVFLESAFFAPAAIAGRARSYGFVSDASHRFERGVDFELPARAIERATRLILDICGGTAGPADETVAKDHLPERPAVRLRPARARRLLGIDLGDDAIVRLLEGVHLSVEREGDALLVTPPSFRFDIEIEEDLIEEVARLHGYDAIPACAPQGSLMMLDRSESGRSAWDVRHLLAARDFQEVVNYAFVEEAWERDFCANAEPIRLANPIASQMSVMRSSLIPGLAANLVANRKRQQARVRVFEIGRCFERKADGEPVAGFQQPLRVAGLAAGLALPEQWGAASRQVDFYDVKSDVEALFAPRALGFERLSDPALHPGRAASILLDGRRIGLLGEIHPVWVQRYEMGTAPVVFEIELDAALLADLPAYREISRQPAVTRDVALVVEQALTAARVIEVMQEAAPTIVMGMELFDIYHGKGIDPGKKSLAFRVLMQDTQRTLEDAEVDAAVEAIVRHTETSLGARLRG.

Residues 39–147 form the tRNA-binding domain; it reads AAAFSGVVVG…DNAPIGQDIR (109 aa). In terms of domain architecture, B5 spans 400-475; sequence PERPAVRLRP…RLHGYDAIPA (76 aa). Mg(2+) is bound by residues aspartate 453, aspartate 459, glutamate 462, and glutamate 463. Residues 698–791 enclose the FDX-ACB domain; that stretch reads SRQPAVTRDV…TETSLGARLR (94 aa).

It belongs to the phenylalanyl-tRNA synthetase beta subunit family. Type 1 subfamily. In terms of assembly, tetramer of two alpha and two beta subunits. It depends on Mg(2+) as a cofactor.

The protein localises to the cytoplasm. It carries out the reaction tRNA(Phe) + L-phenylalanine + ATP = L-phenylalanyl-tRNA(Phe) + AMP + diphosphate + H(+). The protein is Phenylalanine--tRNA ligase beta subunit of Aromatoleum aromaticum (strain DSM 19018 / LMG 30748 / EbN1) (Azoarcus sp. (strain EbN1)).